A 289-amino-acid chain; its full sequence is Mas-related G-protein coupled receptor member G (289 aa).

The Extracellular portion of the chain corresponds to 1 to 13 (MFGLFGLWRTFDS). A helical membrane pass occupies residues 14–34 (VVFYLTLIVGLGGPVGNGLVL). Residues 35–42 (WNLGFRIK) are Cytoplasmic-facing. A helical membrane pass occupies residues 43-63 (KGPFSIYLLHLAAADFLFLSC). The Extracellular segment spans residues 64–78 (RVGFSVAQAALGAQD). Residues 79–99 (TLYFVLTFLWFAVGLWLLAAF) traverse the membrane as a helical segment. The Cytoplasmic portion of the chain corresponds to 100–120 (SVERCLSDLFPACYQGCRPRH). A helical transmembrane segment spans residues 121 to 141 (ASAVLCALVWTPTLPAVPLPA). The Extracellular portion of the chain corresponds to 142–163 (NACGLLRNSACPLVCPRYHVAS). The chain crosses the membrane as a helical span at residues 164 to 184 (VTWFLVLARVAWTAGVVLFVW). The Cytoplasmic portion of the chain corresponds to 185–195 (VTCCSTRPRPR). A helical membrane pass occupies residues 196 to 216 (LYGIVLGALLLLFFCGLPSVF). At 217–221 (YWSLQ) the chain is on the extracellular side. A helical transmembrane segment spans residues 222-242 (PLLNFLLPVFSPLATLLACVN). At 243–289 (SSSKPLIYSGLGRQPGKREPLRSVLRRALGEGAELGARGQSLPMGLL) the chain is on the cytoplasmic side.

Belongs to the G-protein coupled receptor 1 family. Mas subfamily.

Its subcellular location is the cell membrane. In terms of biological role, orphan receptor. May regulate nociceptor function and/or development, including the sensation or modulation of pain. The polypeptide is Mas-related G-protein coupled receptor member G (MRGPRG) (Homo sapiens (Human)).